The chain runs to 873 residues: Alanine--tRNA ligase (873 aa).

Residues His562, His566, Cys664, and His668 each coordinate Zn(2+).

It belongs to the class-II aminoacyl-tRNA synthetase family. It depends on Zn(2+) as a cofactor.

The protein localises to the cytoplasm. The catalysed reaction is tRNA(Ala) + L-alanine + ATP = L-alanyl-tRNA(Ala) + AMP + diphosphate. In terms of biological role, catalyzes the attachment of alanine to tRNA(Ala) in a two-step reaction: alanine is first activated by ATP to form Ala-AMP and then transferred to the acceptor end of tRNA(Ala). Also edits incorrectly charged Ser-tRNA(Ala) and Gly-tRNA(Ala) via its editing domain. The chain is Alanine--tRNA ligase from Photobacterium profundum (strain SS9).